The sequence spans 170 residues: MSLPTGEGFGLNDNILETNVINLAVVVGVVVFFVGKNLTSILENRQETILNNLREADQRASEAREKFNKAKEQLELAEQKAKQIRSEGLLKATTEKNNCLTQYEQDLARLDEYKQETLQFYQQKVFSQLYVSLVSKALQKVKQKFDKRLDNQFHITVNNFFIARFTEYNP.

A helical transmembrane segment spans residues 15-35 (ILETNVINLAVVVGVVVFFVG).

It belongs to the ATPase B chain family. F-type ATPases have 2 components, F(1) - the catalytic core - and F(0) - the membrane proton channel. F(1) has five subunits: alpha(3), beta(3), gamma(1), delta(1), epsilon(1). F(0) has four main subunits: a(1), b(1), b'(1) and c(10-14). The alpha and beta chains form an alternating ring which encloses part of the gamma chain. F(1) is attached to F(0) by a central stalk formed by the gamma and epsilon chains, while a peripheral stalk is formed by the delta, b and b' chains.

It localises to the plastid. The protein localises to the chloroplast thylakoid membrane. Its function is as follows. F(1)F(0) ATP synthase produces ATP from ADP in the presence of a proton or sodium gradient. F-type ATPases consist of two structural domains, F(1) containing the extramembraneous catalytic core and F(0) containing the membrane proton channel, linked together by a central stalk and a peripheral stalk. During catalysis, ATP synthesis in the catalytic domain of F(1) is coupled via a rotary mechanism of the central stalk subunits to proton translocation. Functionally, component of the F(0) channel, it forms part of the peripheral stalk, linking F(1) to F(0). This chain is ATP synthase subunit b, chloroplastic, found in Stigeoclonium helveticum (Green alga).